The chain runs to 435 residues: Histone acetyltransferase type B subunit 2 (435 aa).

WD repeat units follow at residues 135 to 175 (NHAG…SKAP), 188 to 228 (GQTK…KQDP), 238 to 278 (GHSA…TAKA), 284 to 324 (GHNA…TKHH), and 328 to 368 (AHTN…AEQT). The segment at 370–374 (DDAED) is interaction with the histone H4 N-terminus. A WD 6 repeat occupies 385–425 (GHTSKVCDISWSPSSPWTIASASEDNILQVWEPSRHLRTPY).

It belongs to the WD repeat RBAP46/RBAP48/MSI1 family. Component of the HAT-B complex composed of at least HAT1 and HAT2. The HAT-B complex binds to histone H4 tail.

The protein resides in the cytoplasm. It is found in the nucleus. In terms of biological role, regulatory subunit of the histone acetylase B (HAT-B) complex. The complex acetylates 'Lys-12' of histone H4 which is required for telomeric silencing. This is Histone acetyltransferase type B subunit 2 (HAT2) from Cryptococcus neoformans var. neoformans serotype D (strain B-3501A) (Filobasidiella neoformans).